A 201-amino-acid chain; its full sequence is Peroxiredoxin prdx-2 (201 aa).

The Thioredoxin domain maps to 10-168; it reads AFIGKPAPQF…TLRLVQAFQF (159 aa). The active-site Cysteine sulfenic acid (-SOH) intermediate is Cys-55.

This sequence belongs to the peroxiredoxin family. AhpC/Prx1 subfamily. Monomer and homodimer; disulfide-linked. Under nonstress conditions, present in the reduced monomeric form. Forms active hyperoxidized monomers and disulfide-linked homodimers upon oxidation by hydrogen peroxide. Forms active oxidized homodimers in response to the drug metformin. In terms of processing, the enzyme can be inactivated by further oxidation of the cysteine sulfenic acid (C(P)-SOH) to sulphinic acid (C(P)-SO2H) instead of its condensation to a disulfide bond. Expressed in the gonad, neurons and intestine (at protein level). Expressed in the pharyngeal inter-neuron I4 and the sensory interneuron I2. Expressed in the intestine, pharyngeal muscle 1, vulval muscle, body wall muscle, epithelial cells e1 and e3, and neurons in the head and tail.

It is found in the cytoplasm. The catalysed reaction is a hydroperoxide + [thioredoxin]-dithiol = an alcohol + [thioredoxin]-disulfide + H2O. Activated following oxidation of the conserved redox-active cysteine residue, which subsequently allows for the oxidation and activation of substrates. Its function is as follows. Thiol-specific peroxidase that catalyzes the reduction of hydrogen peroxide and organic hydroperoxides to water and alcohols, respectively. In I2 pharyngeal neurons, required for the inhibition of feeding in response to light and hydrogen peroxide. In the intestine, plays a role in protecting cells against oxidative stress by detoxifying peroxides such as hydrogen peroxide. In addition, plays a role in the recovery from oxidative stress induced by hydrogen peroxide. In its hyperoxidized form (induced by hydrogen peroxide), confers protection against heat stress. However, has a low tendency for overoxidation during the normal lifespan. Increases sensitivity to cytotoxicity caused by metalloids and heavy metals such as arsenic and cadmium by playing a role in inhibiting the expression of phase II detoxification genes such as gcs-1 in intestinal cells. In addition, in response to arsenite, promotes the secretion of the insulin ligand daf-28 into the pseudocoelom, which negatively regulates the activities of daf-16 and skn-1. Plays a role in promoting longevity. Plays a role in the mitohormetic pathway by promoting the activation of pmk-1 in response to the drug metformin. This Caenorhabditis elegans protein is Peroxiredoxin prdx-2.